A 514-amino-acid polypeptide reads, in one-letter code: ATP synthase subunit alpha (514 aa).

Position 170–177 (170–177) interacts with ATP; it reads GDRQIGKT.

It belongs to the ATPase alpha/beta chains family. As to quaternary structure, F-type ATPases have 2 components, CF(1) - the catalytic core - and CF(0) - the membrane proton channel. CF(1) has five subunits: alpha(3), beta(3), gamma(1), delta(1), epsilon(1). CF(0) has three main subunits: a(1), b(2) and c(9-12). The alpha and beta chains form an alternating ring which encloses part of the gamma chain. CF(1) is attached to CF(0) by a central stalk formed by the gamma and epsilon chains, while a peripheral stalk is formed by the delta and b chains.

Its subcellular location is the cell inner membrane. The catalysed reaction is ATP + H2O + 4 H(+)(in) = ADP + phosphate + 5 H(+)(out). Its function is as follows. Produces ATP from ADP in the presence of a proton gradient across the membrane. The alpha chain is a regulatory subunit. In Pseudomonas putida (strain GB-1), this protein is ATP synthase subunit alpha.